A 132-amino-acid polypeptide reads, in one-letter code: MSMTDPIADMLVRIKNAASVGKPNVRFPFSKVKLAIALVLKHEGYIFDAKVIQGDNSKSDIEVVLKYFEGRPVIRILKRVSRSGLRKYCGKAELPKVLGGLGVSIISTSKGIMTDSKARESGVGGEVLCFVA.

Belongs to the universal ribosomal protein uS8 family. In terms of assembly, part of the 30S ribosomal subunit. Contacts proteins S5 and S12.

In terms of biological role, one of the primary rRNA binding proteins, it binds directly to 16S rRNA central domain where it helps coordinate assembly of the platform of the 30S subunit. This chain is Small ribosomal subunit protein uS8, found in Xylella fastidiosa (strain M12).